A 127-amino-acid chain; its full sequence is Histone H2B type 1-A (127 aa).

The interval 1–36 is disordered; it reads MPEVSSKGATISKKGFKKAVVKTQKKEGKKRKRTRK. Residue Pro-2 is modified to N-acetylproline. 7 positions are modified to N6-acetyllysine; alternate: Lys-7, Lys-13, Lys-14, Lys-17, Lys-18, Lys-22, and Lys-25. Residues Lys-7, Lys-13, Lys-14, Lys-17, Lys-18, Lys-22, Lys-25, and Lys-36 each carry the N6-crotonyllysine; alternate modification. Lys-7 and Lys-13 each carry N6-lactoyllysine; alternate. Lys-7 participates in a covalent cross-link: Glycyl lysine isopeptide (Lys-Gly) (interchain with G-Cter in SUMO2); alternate. Lys-17, Lys-18, Lys-22, and Lys-25 each carry N6-lactoyllysine; alternate. Lys-22 participates in a covalent cross-link: Glycyl lysine isopeptide (Lys-Gly) (interchain with G-Cter in SUMO2); alternate. Position 36 is an N6-succinyllysine; alternate (Lys-36). Residue Lys-36 forms a Glycyl lysine isopeptide (Lys-Gly) (interchain with G-Cter in ubiquitin); alternate linkage. Ser-38 is subject to Phosphoserine. N6-lactoyllysine; alternate is present on Lys-45. Lys-48 is subject to N6-methyllysine. Lys-59 bears the N6,N6-dimethyllysine mark. Arg-81 is subject to Dimethylated arginine. Ser-86 is subject to Phosphoserine. Lys-87 is modified (N6-acetyllysine; alternate). Lys-87 carries the post-translational modification N6-lactoyllysine; alternate. Lys-87 carries the post-translational modification N6,N6,N6-trimethyllysine; alternate. An omega-N-methylarginine mark is found at Arg-88 and Arg-94. Lys-110 carries the post-translational modification N6-lactoyllysine; alternate. N6-methyllysine is present on Lys-110. A Phosphothreonine modification is found at Thr-117. N6-lactoyllysine; alternate occurs at positions 118 and 122. Lys-118 and Lys-122 each carry N6-succinyllysine; alternate. Lys-118 is subject to N6-methylated lysine; alternate. Lys-122 is covalently cross-linked (Glycyl lysine isopeptide (Lys-Gly) (interchain with G-Cter in ubiquitin); alternate).

It belongs to the histone H2B family. In terms of assembly, the nucleosome is a histone octamer containing two molecules each of H2A, H2B, H3 and H4 assembled in one H3-H4 heterotetramer and two H2A-H2B heterodimers. Post-translationally, monoubiquitination at Lys-36 (H2BK34Ub) by the MSL1/MSL2 dimer is required for histone H3 'Lys-4' (H3K4me) and 'Lys-79' (H3K79me) methylation and transcription activation at specific gene loci, such as HOXA9 and MEIS1 loci. Similarly, monoubiquitination at Lys-122 (H2BK120Ub) by the RNF20/40 complex gives a specific tag for epigenetic transcriptional activation and is also prerequisite for histone H3 'Lys-4' and 'Lys-79' methylation. It also functions cooperatively with the FACT dimer to stimulate elongation by RNA polymerase II. H2BK120Ub also acts as a regulator of mRNA splicing: deubiquitination by USP49 is required for efficient cotranscriptional splicing of a large set of exons. Crotonylation (Kcr) is specifically present in male germ cells and marks testis-specific genes in post-meiotic cells, including X-linked genes that escape sex chromosome inactivation in haploid cells. Crotonylation marks active promoters and enhancers and confers resistance to transcriptional repressors. It is also associated with post-meiotically activated genes on autosomes. In terms of processing, acetylated during spermatogenesis. Acetylated form is most abundant in spermatogonia compared to spermatocytes and round spermatids. Post-translationally, phosphorylated at Thr-117 in spermatogonia, spermatocytes and round spermatids. Methylated at Lys-118 in spermatogonia, spermatocytes and round spermatids. In terms of processing, lactylated in macrophages by EP300/P300 by using lactoyl-CoA directly derived from endogenous or exogenous lactate, leading to stimulates gene transcription. In terms of tissue distribution, mainly expressed in testis, and the corresponding protein is also present in mature sperm (at protein level). Also found in some fat cells.

It is found in the nucleus. The protein resides in the chromosome. Its function is as follows. Variant histone specifically required to direct the transformation of dissociating nucleosomes to protamine in male germ cells. Entirely replaces classical histone H2B prior nucleosome to protamine transition and probably acts as a nucleosome dissociating factor that creates a more dynamic chromatin, facilitating the large-scale exchange of histones. Core component of nucleosome. Nucleosomes wrap and compact DNA into chromatin, limiting DNA accessibility to the cellular machineries which require DNA as a template. Histones thereby play a central role in transcription regulation, DNA repair, DNA replication and chromosomal stability. DNA accessibility is regulated via a complex set of post-translational modifications of histones, also called histone code, and nucleosome remodeling. Also found in fat cells, its function and the presence of post-translational modifications specific to such cells are still unclear. The sequence is that of Histone H2B type 1-A from Homo sapiens (Human).